Consider the following 189-residue polypeptide: NADH-quinone oxidoreductase subunit B (189 aa).

[4Fe-4S] cluster is bound by residues Cys39, Cys40, Cys104, and Cys135.

This sequence belongs to the complex I 20 kDa subunit family. As to quaternary structure, NDH-1 is composed of 14 different subunits. Subunits NuoB, C, D, E, F, and G constitute the peripheral sector of the complex. The cofactor is [4Fe-4S] cluster.

Its subcellular location is the cell inner membrane. The enzyme catalyses a quinone + NADH + 5 H(+)(in) = a quinol + NAD(+) + 4 H(+)(out). Its function is as follows. NDH-1 shuttles electrons from NADH, via FMN and iron-sulfur (Fe-S) centers, to quinones in the respiratory chain. The immediate electron acceptor for the enzyme in this species is believed to be a menaquinone. Couples the redox reaction to proton translocation (for every two electrons transferred, four hydrogen ions are translocated across the cytoplasmic membrane), and thus conserves the redox energy in a proton gradient. This Chlorobium phaeobacteroides (strain DSM 266 / SMG 266 / 2430) protein is NADH-quinone oxidoreductase subunit B.